The primary structure comprises 101 residues: Cyanovirin-N (101 aa).

2 disulfides stabilise this stretch: Cys8–Cys22 and Cys58–Cys73.

The protein belongs to the cyanovirin-N family. As to quaternary structure, in solution exists as a metastable domain-swapped homodimer which very slowly converts into a more stable monomeric form at room temperature. Under physiological conditions it is unlikely that the dimeric species exists and indeed the monomer is more active against HIV. Interacts with HIV-1 gp120. Cleavage, or reduction and alkylation of the disulfide bonds results in the loss of anti-HIV activity.

Mannose-binding lectin. This Nostoc ellipsosporum protein is Cyanovirin-N.